The chain runs to 206 residues: Small ribosomal subunit protein uS4 (206 aa).

The S4 RNA-binding domain maps to 96–168; sequence SRLDNVVYRM…LELAEQREKP (73 aa).

Belongs to the universal ribosomal protein uS4 family. Part of the 30S ribosomal subunit. Contacts protein S5. The interaction surface between S4 and S5 is involved in control of translational fidelity.

In terms of biological role, one of the primary rRNA binding proteins, it binds directly to 16S rRNA where it nucleates assembly of the body of the 30S subunit. Its function is as follows. With S5 and S12 plays an important role in translational accuracy. The polypeptide is Small ribosomal subunit protein uS4 (Baumannia cicadellinicola subsp. Homalodisca coagulata).